The sequence spans 131 residues: Small ribosomal subunit protein uS8 (131 aa).

Belongs to the universal ribosomal protein uS8 family. In terms of assembly, part of the 30S ribosomal subunit. Contacts proteins S5 and S12.

Functionally, one of the primary rRNA binding proteins, it binds directly to 16S rRNA central domain where it helps coordinate assembly of the platform of the 30S subunit. The sequence is that of Small ribosomal subunit protein uS8 from Ruminiclostridium cellulolyticum (strain ATCC 35319 / DSM 5812 / JCM 6584 / H10) (Clostridium cellulolyticum).